The primary structure comprises 271 residues: Type III pantothenate kinase (271 aa).

ATP is bound at residue Asp6–Val13. Residue Gly109–Arg112 participates in substrate binding. Catalysis depends on Asp111, which acts as the Proton acceptor. Asp131 is a K(+) binding site. Residue Thr134 participates in ATP binding. Thr186 contributes to the substrate binding site.

This sequence belongs to the type III pantothenate kinase family. In terms of assembly, homodimer. NH4(+) is required as a cofactor. Requires K(+) as cofactor.

The protein localises to the cytoplasm. It carries out the reaction (R)-pantothenate + ATP = (R)-4'-phosphopantothenate + ADP + H(+). It participates in cofactor biosynthesis; coenzyme A biosynthesis; CoA from (R)-pantothenate: step 1/5. Functionally, catalyzes the phosphorylation of pantothenate (Pan), the first step in CoA biosynthesis. This is Type III pantothenate kinase from Rhodococcus erythropolis (strain PR4 / NBRC 100887).